Consider the following 391-residue polypeptide: Metal tolerance protein 7 (391 aa).

The disordered stretch occupies residues 1-21 (MGSRGRRGGGERETETEEDET). Over 1–103 (MGSRGRRGGG…LRQMAKGERL (103 aa)) the chain is Cytoplasmic. The helical transmembrane segment at 104–124 (AINLSNIINLILFIGKVLASV) threads the bilayer. Residues 125-134 (ESLSMAVIAS) lie on the Vacuolar side of the membrane. A helical membrane pass occupies residues 135–155 (TLDSLLDLLSGFILWFTAHAM). The Cytoplasmic segment spans residues 156 to 171 (KKPNKYSYPIGKRRMQ). A helical transmembrane segment spans residues 172–192 (PVGIIVFASVMGTLGFQVLIE). Residues 193–210 (SGRQLITNEHQVFDHRKE) are Vacuolar-facing. The chain crosses the membrane as a helical span at residues 211–231 (LWMIGSMSSVAVVKFFLMLYC). Over 232–246 (RSFKNEIVRAYAQDH) the chain is Cytoplasmic. A helical transmembrane segment spans residues 247–264 (FFDVITNSVGLVSALLAV). The Vacuolar segment spans residues 265-266 (RY). Residues 267 to 287 (KWWMDPVGAILIAVYTITTWA) form a helical membrane-spanning segment. Residues 288–391 (RTVVENVGTL…THRPEHKAEV (104 aa)) lie on the Cytoplasmic side of the membrane.

The protein belongs to the cation diffusion facilitator (CDF) transporter (TC 2.A.4) family. SLC30A subfamily.

It localises to the vacuole membrane. Functionally, involved in sequestration of excess metal in the cytoplasm into vacuoles to maintain metal homeostasis. This is Metal tolerance protein 7 (MTP7) from Oryza sativa subsp. japonica (Rice).